The sequence spans 209 residues: Cytidylate kinase (209 aa).

Position 7 to 15 (7 to 15 (GPAASGKGT)) interacts with ATP.

Belongs to the cytidylate kinase family. Type 1 subfamily.

It localises to the cytoplasm. The enzyme catalyses CMP + ATP = CDP + ADP. It catalyses the reaction dCMP + ATP = dCDP + ADP. This Afipia carboxidovorans (strain ATCC 49405 / DSM 1227 / KCTC 32145 / OM5) (Oligotropha carboxidovorans) protein is Cytidylate kinase.